Consider the following 230-residue polypeptide: Porin OmpL (230 aa).

A signal peptide spans 1–20 (MKKINAIILLSSLTSASVFA).

It belongs to the oligogalacturonate-specific porin KdgM (TC 1.B.35) family. OmpL subfamily.

It is found in the cell outer membrane. Its function is as follows. Outer membrane channel protein that allows an efficient diffusion of low-molecular-weight solutes such as small sugars and tetraglycine. However, the specific substrate recognized by the OmpL channel is unknown. In Escherichia coli (strain K12), this protein is Porin OmpL (ompL).